A 495-amino-acid chain; its full sequence is Adenosylhomocysteinase (495 aa).

T71, D156, and E218 together coordinate substrate. 219-221 contacts NAD(+); sequence TTT. Positions 248 and 252 each coordinate substrate. NAD(+)-binding positions include N253, 282–287, E305, N340, 361–363, and N409; these read GYGDVG and IGH.

This sequence belongs to the adenosylhomocysteinase family. NAD(+) is required as a cofactor.

The protein resides in the cytoplasm. The catalysed reaction is S-adenosyl-L-homocysteine + H2O = L-homocysteine + adenosine. Its pathway is amino-acid biosynthesis; L-homocysteine biosynthesis; L-homocysteine from S-adenosyl-L-homocysteine: step 1/1. May play a key role in the regulation of the intracellular concentration of adenosylhomocysteine. The chain is Adenosylhomocysteinase from Mycobacterium bovis (strain ATCC BAA-935 / AF2122/97).